Reading from the N-terminus, the 99-residue chain is Plastocyanin (99 aa).

One can recognise a Plastocyanin-like domain in the interval 1-99; sequence IEVLLGSDDG…AGMVGKVTVN (99 aa). Cu cation is bound by residues histidine 37, cysteine 84, histidine 87, and methionine 92.

The protein belongs to the plastocyanin family. Requires Cu(2+) as cofactor.

The protein localises to the plastid. The protein resides in the chloroplast thylakoid membrane. Functionally, participates in electron transfer between P700 and the cytochrome b6-f complex in photosystem I. In Solanum crispum (Chilean potato-tree), this protein is Plastocyanin (PETE).